Consider the following 140-residue polypeptide: uncharacterized protein (140 aa).

A run of 3 helical transmembrane segments spans residues 20-42, 88-110, and 115-137; these read ILYYGGLIGIIFMAITFAIYVSG, FVALAFLAMITIICYLAIIPVLL, and IIYTILAIAEVIILLLAASGLLQ.

The protein resides in the cell membrane. This is an uncharacterized protein from Archaeoglobus fulgidus (strain ATCC 49558 / DSM 4304 / JCM 9628 / NBRC 100126 / VC-16).